Consider the following 313-residue polypeptide: Porphobilinogen deaminase (313 aa).

Cys-242 is modified (S-(dipyrrolylmethanemethyl)cysteine).

This sequence belongs to the HMBS family. As to quaternary structure, monomer. Requires dipyrromethane as cofactor.

It catalyses the reaction 4 porphobilinogen + H2O = hydroxymethylbilane + 4 NH4(+). It functions in the pathway porphyrin-containing compound metabolism; protoporphyrin-IX biosynthesis; coproporphyrinogen-III from 5-aminolevulinate: step 2/4. Its function is as follows. Tetrapolymerization of the monopyrrole PBG into the hydroxymethylbilane pre-uroporphyrinogen in several discrete steps. This chain is Porphobilinogen deaminase, found in Photorhabdus laumondii subsp. laumondii (strain DSM 15139 / CIP 105565 / TT01) (Photorhabdus luminescens subsp. laumondii).